We begin with the raw amino-acid sequence, 707 residues long: DNA ligase (707 aa).

Residues 48–52, 97–98, and E134 each bind NAD(+); these read DAEYD and SI. Residue K136 is the N6-AMP-lysine intermediate of the active site. Positions 157, 193, 320, and 344 each coordinate NAD(+). Positions 438, 441, 456, and 462 each coordinate Zn(2+). The BRCT domain maps to 621 to 707; it reads VAPKPLSGKT…DSPPDERIPA (87 aa).

The protein belongs to the NAD-dependent DNA ligase family. LigA subfamily. Mg(2+) serves as cofactor. Mn(2+) is required as a cofactor.

The enzyme catalyses NAD(+) + (deoxyribonucleotide)n-3'-hydroxyl + 5'-phospho-(deoxyribonucleotide)m = (deoxyribonucleotide)n+m + AMP + beta-nicotinamide D-nucleotide.. In terms of biological role, DNA ligase that catalyzes the formation of phosphodiester linkages between 5'-phosphoryl and 3'-hydroxyl groups in double-stranded DNA using NAD as a coenzyme and as the energy source for the reaction. It is essential for DNA replication and repair of damaged DNA. In Polaromonas naphthalenivorans (strain CJ2), this protein is DNA ligase.